The following is a 193-amino-acid chain: dCTP deaminase (193 aa).

Residues 110–115 (RSSLAR), aspartate 128, 136–138 (VLE), tyrosine 171, lysine 178, and glutamine 182 contribute to the dCTP site. The active-site Proton donor/acceptor is the glutamate 138. The tract at residues 169 to 193 (RPYNRREDAKYRNQQGAVASRIDKD) is disordered.

This sequence belongs to the dCTP deaminase family. In terms of assembly, homotrimer.

It carries out the reaction dCTP + H2O + H(+) = dUTP + NH4(+). It functions in the pathway pyrimidine metabolism; dUMP biosynthesis; dUMP from dCTP (dUTP route): step 1/2. Catalyzes the deamination of dCTP to dUTP. This chain is dCTP deaminase, found in Escherichia coli O8 (strain IAI1).